The chain runs to 206 residues: RNA pyrophosphohydrolase (206 aa).

Residues 6–150 (GYRPNVGIVI…KRDVYRKVMK (145 aa)) enclose the Nudix hydrolase domain. Positions 38 to 59 (GGINEGENIETAMYRELYEEVG) match the Nudix box motif. Residues 162-191 (KPETVEKPRVERTEKRDFQKRDNQKREFRK) are compositionally biased toward basic and acidic residues. A disordered region spans residues 162 to 206 (KPETVEKPRVERTEKRDFQKRDNQKREFRKSARMWNNSHQKGKAQ).

Belongs to the Nudix hydrolase family. RppH subfamily. A divalent metal cation is required as a cofactor.

Its function is as follows. Accelerates the degradation of transcripts by removing pyrophosphate from the 5'-end of triphosphorylated RNA, leading to a more labile monophosphorylated state that can stimulate subsequent ribonuclease cleavage. This Actinobacillus pleuropneumoniae serotype 7 (strain AP76) protein is RNA pyrophosphohydrolase.